The primary structure comprises 198 residues: HTH-type transcriptional regulator BetI (198 aa).

One can recognise an HTH tetR-type domain in the interval 8–68 (PLRRRELIDA…ATMRHLLREL (61 aa)). Positions 31-50 (TVAQIAHEAGVSPALAHHYF) form a DNA-binding region, H-T-H motif.

Its pathway is amine and polyamine biosynthesis; betaine biosynthesis via choline pathway [regulation]. Repressor involved in the biosynthesis of the osmoprotectant glycine betaine. It represses transcription of the choline transporter BetT and the genes of BetAB involved in the synthesis of glycine betaine. The polypeptide is HTH-type transcriptional regulator BetI (Brucella suis (strain ATCC 23445 / NCTC 10510)).